Reading from the N-terminus, the 915-residue chain is Nitrate reductase [NADH] (915 aa).

Residues 1–102 form a disordered region; that stretch reads MAASVEPRQP…PRDEGTADAW (102 aa). The segment covering 16 to 26 has biased composition (low complexity); that stretch reads APATAPTARAP. The segment covering 57–71 has biased composition (acidic residues); sequence AEEEEDDDDEDDEGH. Residues 88-97 are compositionally biased toward basic and acidic residues; that stretch reads PSTRDPRDEG. A Mo-molybdopterin-binding site is contributed by C189. The region spanning 538–613 is the Cytochrome b5 heme-binding domain; it reads DKQFTMSEVR…LDTYRIGELI (76 aa). 2 residues coordinate heme: H573 and H596. The FAD-binding FR-type domain maps to 654 to 767; it reads REKVPCRLVD…KGPLGHVEYT (114 aa). FAD is bound by residues 706 to 709, 723 to 727, F728, F735, 740 to 742, S791, and T794; these read RAYT, LVKVY, and LMT.

It belongs to the nitrate reductase family. Homodimer. Requires FAD as cofactor. Heme serves as cofactor. It depends on Mo-molybdopterin as a cofactor.

The catalysed reaction is nitrite + NAD(+) + H2O = nitrate + NADH + H(+). Nitrate reductase is a key enzyme involved in the first step of nitrate assimilation in plants, fungi and bacteria. This chain is Nitrate reductase [NADH], found in Hordeum vulgare (Barley).